A 165-amino-acid chain; its full sequence is Neurotrophin-3 (165 aa).

Positions 1 to 3 (IQS) are cleaved as a signal peptide. Residues 4-119 (TSMDQGSLSE…VLNQTSRRKR (116 aa)) constitute a propeptide that is removed on maturation. The N-linked (GlcNAc...) asparagine glycan is linked to Asn-112.

The protein belongs to the NGF-beta family.

It is found in the secreted. In terms of biological role, seems to promote the survival of visceral and proprioceptive sensory neurons. This Morelia spilota (Carpet python) protein is Neurotrophin-3 (NTF3).